Reading from the N-terminus, the 417-residue chain is Serine hydroxymethyltransferase (417 aa).

K54 carries the post-translational modification N6-acetyllysine. Residues L121 and G125 to L127 each bind (6S)-5,6,7,8-tetrahydrofolate. K229 bears the N6-(pyridoxal phosphate)lysine mark. N6-acetyllysine occurs at positions 250, 285, and 354. S355–F357 contributes to the (6S)-5,6,7,8-tetrahydrofolate binding site. K375 carries the post-translational modification N6-acetyllysine.

This sequence belongs to the SHMT family. In terms of assembly, homodimer. It depends on pyridoxal 5'-phosphate as a cofactor.

The protein resides in the cytoplasm. It catalyses the reaction (6R)-5,10-methylene-5,6,7,8-tetrahydrofolate + glycine + H2O = (6S)-5,6,7,8-tetrahydrofolate + L-serine. The protein operates within one-carbon metabolism; tetrahydrofolate interconversion. It participates in amino-acid biosynthesis; glycine biosynthesis; glycine from L-serine: step 1/1. Catalyzes the reversible interconversion of serine and glycine with tetrahydrofolate (THF) serving as the one-carbon carrier. This reaction serves as the major source of one-carbon groups required for the biosynthesis of purines, thymidylate, methionine, and other important biomolecules. Also exhibits THF-independent aldolase activity toward beta-hydroxyamino acids, producing glycine and aldehydes, via a retro-aldol mechanism. This chain is Serine hydroxymethyltransferase, found in Escherichia coli O157:H7.